The primary structure comprises 103 residues: Cell division protein CrgA (103 aa).

Transmembrane regions (helical) follow at residues 49-69 and 80-100; these read FVPL…VYYL and IGAW…LMTM.

Belongs to the CrgA family.

The protein localises to the cell membrane. Functionally, involved in cell division. The sequence is that of Cell division protein CrgA from Bifidobacterium longum (strain NCC 2705).